A 354-amino-acid polypeptide reads, in one-letter code: Non-structural protein NS2 (354 aa).

Disordered regions lie at residues 163-196 and 229-269; these read NERE…DNEA and DERD…THIT. 2 stretches are compositionally biased toward basic and acidic residues: residues 178–196 and 237–249; these read SREE…DNEA and DERG…KTLS. The segment covering 250–260 has biased composition (acidic residues); sequence DDDDQGEDASD.

Single-stranded RNA-binding protein. The polypeptide is Non-structural protein NS2 (Segment-8) (Bluetongue virus 17 (isolate USA) (BTV 17)).